Here is a 351-residue protein sequence, read N- to C-terminus: O-methyltransferase apf6 (351 aa).

S-adenosyl-L-methionine-binding positions include 231 to 232 (GG), 279 to 280 (NF), and Arg295. Catalysis depends on His299, which acts as the Proton acceptor.

The protein belongs to the class I-like SAM-binding methyltransferase superfamily. Cation-independent O-methyltransferase family.

It participates in secondary metabolite biosynthesis. Its function is as follows. O-methyltransferase; part of the gene cluster that mediates the biosynthesis of the cyclic tetrapeptide apicidin F (APF). The non-ribosomal peptide synthetase apf1 incorporates four different amino acids to produce apicidin F: L-phenylalanine, D-pipecolic acid (D-pip), N-methoxy-L-tryptophan and L-2-aminooctanedioic acid. L-Phenylalanine is the only proteinogenic amino acid directly used by apf1. The 3 other apf1 substrates are non-proteinogenic and have to be modified by other enzymes of the cluster. Lysine is converted to delta-1-pyrroline-5-carboxylate (P5C) which is reduced to L-pipecolic acid (L-pip) by apf3. L-pip is epimerized to D-pip, probably by apf1 activity, prior to incorporation. L-Tryptophan is N-oxidyzed by one of the cytochrome P450 monooxygenases (apf7 or apf8), and further methylated at the hydroxy group by the O-methyltransferase apf6 to yield N-methoxy-L-tryptophan. The synthesis of the fourth apf1 substrate is more complex. The fatty acid synthase apf5 is involved in the synthesis of the octanoic acid backbone of L-2-aminooctanedioic acid by fixing one acetyl-CoA unit and three malonyl-CoA units. Then one of the cytochrome P450 monooxygenases (apf7 or apf8) may oxidize this backbone to 2-oxooctanoic acid. The aminotransferase apf4 is predicted to catalyze the exchange of the keto group with an amino group. The next step would be the oxidation of 2-aminooctanoic acid by one of the cytochrome P450 monooxygenases (apf7 or apf8). The last step is the oxidation of 2-amino-8-hydroxyoctanoic acid to 2-aminooctanedioic acid is catalyzed by the FAD-dependent monooxygenase apf9. The polypeptide is O-methyltransferase apf6 (Gibberella fujikuroi (strain CBS 195.34 / IMI 58289 / NRRL A-6831) (Bakanae and foot rot disease fungus)).